The primary structure comprises 632 residues: Phosphomethylpyrimidine synthase (632 aa).

Substrate is bound by residues asparagine 237, methionine 266, tyrosine 295, histidine 331, 351–353, 392–395, and glutamate 431; these read SRG and DGLR. Histidine 435 contacts Zn(2+). Tyrosine 458 contacts substrate. Histidine 499 contributes to the Zn(2+) binding site. Cysteine 579, cysteine 582, and cysteine 587 together coordinate [4Fe-4S] cluster.

The protein belongs to the ThiC family. Homodimer. It depends on [4Fe-4S] cluster as a cofactor.

It carries out the reaction 5-amino-1-(5-phospho-beta-D-ribosyl)imidazole + S-adenosyl-L-methionine = 4-amino-2-methyl-5-(phosphooxymethyl)pyrimidine + CO + 5'-deoxyadenosine + formate + L-methionine + 3 H(+). Its pathway is cofactor biosynthesis; thiamine diphosphate biosynthesis. In terms of biological role, catalyzes the synthesis of the hydroxymethylpyrimidine phosphate (HMP-P) moiety of thiamine from aminoimidazole ribotide (AIR) in a radical S-adenosyl-L-methionine (SAM)-dependent reaction. The protein is Phosphomethylpyrimidine synthase of Nitrosomonas eutropha (strain DSM 101675 / C91 / Nm57).